The following is a 712-amino-acid chain: Polyribonucleotide nucleotidyltransferase (712 aa).

Mg(2+) is bound by residues Asp493 and Asp499. Positions 560–619 constitute a KH domain; sequence PRLLTFKVDPEDIGKIIGPGGKMVRSITEATGAKVDISDDGTITVSSSVGGQAEAARAMI. Residues 629-697 enclose the S1 motif domain; that stretch reads GQVYLGKVTR…HKGRVNLTRL (69 aa).

It belongs to the polyribonucleotide nucleotidyltransferase family. The cofactor is Mg(2+).

It localises to the cytoplasm. It catalyses the reaction RNA(n+1) + phosphate = RNA(n) + a ribonucleoside 5'-diphosphate. Involved in mRNA degradation. Catalyzes the phosphorolysis of single-stranded polyribonucleotides processively in the 3'- to 5'-direction. This chain is Polyribonucleotide nucleotidyltransferase, found in Synechococcus sp. (strain JA-3-3Ab) (Cyanobacteria bacterium Yellowstone A-Prime).